The sequence spans 830 residues: Periplasmic nitrate reductase (830 aa).

Residues methionine 1 to alanine 32 constitute a signal peptide (tat-type signal). In terms of domain architecture, 4Fe-4S Mo/W bis-MGD-type spans isoleucine 39 to aspartate 95. Cysteine 46, cysteine 49, cysteine 53, and cysteine 81 together coordinate [4Fe-4S] cluster. Residues lysine 83, glutamine 151, asparagine 176, cysteine 180, tryptophan 213–methionine 220, serine 244–histidine 248, methionine 374, glutamine 378, asparagine 484, serine 510–aspartate 511, lysine 533, aspartate 560, and threonine 720–threonine 729 contribute to the Mo-bis(molybdopterin guanine dinucleotide) site. Phenylalanine 796 contacts substrate. Mo-bis(molybdopterin guanine dinucleotide) is bound by residues asparagine 804 and lysine 821.

It belongs to the prokaryotic molybdopterin-containing oxidoreductase family. NasA/NapA/NarB subfamily. As to quaternary structure, component of the periplasmic nitrate reductase NapAB complex composed of NapA and NapB. Requires [4Fe-4S] cluster as cofactor. Mo-bis(molybdopterin guanine dinucleotide) is required as a cofactor. Post-translationally, predicted to be exported by the Tat system. The position of the signal peptide cleavage has not been experimentally proven.

Its subcellular location is the periplasm. The catalysed reaction is 2 Fe(II)-[cytochrome] + nitrate + 2 H(+) = 2 Fe(III)-[cytochrome] + nitrite + H2O. In terms of biological role, catalytic subunit of the periplasmic nitrate reductase complex NapAB. Receives electrons from NapB and catalyzes the reduction of nitrate to nitrite. This chain is Periplasmic nitrate reductase, found in Mannheimia succiniciproducens (strain KCTC 0769BP / MBEL55E).